We begin with the raw amino-acid sequence, 255 residues long: tRNA (guanine-N(1)-)-methyltransferase (255 aa).

S-adenosyl-L-methionine-binding positions include Gly-113 and 133-138; that span reads IGDYVL.

Belongs to the RNA methyltransferase TrmD family. In terms of assembly, homodimer.

The protein resides in the cytoplasm. The catalysed reaction is guanosine(37) in tRNA + S-adenosyl-L-methionine = N(1)-methylguanosine(37) in tRNA + S-adenosyl-L-homocysteine + H(+). In terms of biological role, specifically methylates guanosine-37 in various tRNAs. The polypeptide is tRNA (guanine-N(1)-)-methyltransferase (Shigella flexneri serotype 5b (strain 8401)).